The following is a 177-amino-acid chain: von Ebner gland protein 2 (177 aa).

The signal sequence occupies residues 1–18 (MKALLLTFSLSLLAALQA). A disulfide bond links Cys80 and Cys172.

Belongs to the calycin superfamily. Lipocalin family. Homodimer.

The protein resides in the secreted. Could play a role in taste reception. Could be necessary for the concentration and delivery of sapid molecules in the gustatory system. This is von Ebner gland protein 2 (Vegp2) from Rattus norvegicus (Rat).